The primary structure comprises 546 residues: CTP synthase (546 aa).

An amidoligase domain region spans residues 1–264 (MRYIVVTGGV…TKYIMKAMRL (264 aa)). S12 serves as a coordination point for CTP. Residue S12 coordinates UTP. ATP contacts are provided by residues 13–18 (GLGKGI) and D70. 2 residues coordinate Mg(2+): D70 and E140. CTP contacts are provided by residues 147–149 (DIE), 185–190 (KTKPTQ), and K221. UTP contacts are provided by residues 185–190 (KTKPTQ) and K221. Residues 298 to 534 (GSQCTDPMKD…VEAMKAQRLR (237 aa)) form the Glutamine amidotransferase type-1 domain. Residue G357 coordinates L-glutamine. C384 serves as the catalytic Nucleophile; for glutamine hydrolysis. L-glutamine is bound by residues 385-388 (FGMQ), E408, and R464. Active-site residues include H507 and E509.

It belongs to the CTP synthase family. As to quaternary structure, homotetramer.

It catalyses the reaction UTP + L-glutamine + ATP + H2O = CTP + L-glutamate + ADP + phosphate + 2 H(+). The catalysed reaction is L-glutamine + H2O = L-glutamate + NH4(+). The enzyme catalyses UTP + NH4(+) + ATP = CTP + ADP + phosphate + 2 H(+). It participates in pyrimidine metabolism; CTP biosynthesis via de novo pathway; CTP from UDP: step 2/2. With respect to regulation, allosterically activated by GTP, when glutamine is the substrate; GTP has no effect on the reaction when ammonia is the substrate. The allosteric effector GTP functions by stabilizing the protein conformation that binds the tetrahedral intermediate(s) formed during glutamine hydrolysis. Inhibited by the product CTP, via allosteric rather than competitive inhibition. In terms of biological role, catalyzes the ATP-dependent amination of UTP to CTP with either L-glutamine or ammonia as the source of nitrogen. Regulates intracellular CTP levels through interactions with the four ribonucleotide triphosphates. The chain is CTP synthase from Methanothrix thermoacetophila (strain DSM 6194 / JCM 14653 / NBRC 101360 / PT) (Methanosaeta thermophila).